A 433-amino-acid polypeptide reads, in one-letter code: Serine hydroxymethyltransferase (433 aa).

Residues Leu-132 and 136 to 138 (GHL) contribute to the (6S)-5,6,7,8-tetrahydrofolate site. Lys-241 carries the post-translational modification N6-(pyridoxal phosphate)lysine.

This sequence belongs to the SHMT family. Homodimer. The cofactor is pyridoxal 5'-phosphate.

It localises to the cytoplasm. It catalyses the reaction (6R)-5,10-methylene-5,6,7,8-tetrahydrofolate + glycine + H2O = (6S)-5,6,7,8-tetrahydrofolate + L-serine. It functions in the pathway one-carbon metabolism; tetrahydrofolate interconversion. It participates in amino-acid biosynthesis; glycine biosynthesis; glycine from L-serine: step 1/1. Catalyzes the reversible interconversion of serine and glycine with tetrahydrofolate (THF) serving as the one-carbon carrier. This reaction serves as the major source of one-carbon groups required for the biosynthesis of purines, thymidylate, methionine, and other important biomolecules. Also exhibits THF-independent aldolase activity toward beta-hydroxyamino acids, producing glycine and aldehydes, via a retro-aldol mechanism. The polypeptide is Serine hydroxymethyltransferase (Bradyrhizobium sp. (strain ORS 278)).